Consider the following 118-residue polypeptide: Small ribosomal subunit protein uS13 (118 aa).

The disordered stretch occupies residues G94 to K118. Basic residues predominate over residues R107 to K118.

Belongs to the universal ribosomal protein uS13 family. As to quaternary structure, part of the 30S ribosomal subunit. Forms a loose heterodimer with protein S19. Forms two bridges to the 50S subunit in the 70S ribosome.

Located at the top of the head of the 30S subunit, it contacts several helices of the 16S rRNA. In the 70S ribosome it contacts the 23S rRNA (bridge B1a) and protein L5 of the 50S subunit (bridge B1b), connecting the 2 subunits; these bridges are implicated in subunit movement. Contacts the tRNAs in the A and P-sites. The sequence is that of Small ribosomal subunit protein uS13 from Nitrosococcus oceani (strain ATCC 19707 / BCRC 17464 / JCM 30415 / NCIMB 11848 / C-107).